The primary structure comprises 603 residues: Probable potassium transport system protein Kup (603 aa).

12 consecutive transmembrane segments (helical) span residues glycine 15–leucine 35, valine 43–alanine 63, alanine 94–isoleucine 114, isoleucine 136–glutamine 156, isoleucine 163–isoleucine 183, alanine 201–leucine 221, alanine 244–isoleucine 264, isoleucine 284–isoleucine 304, isoleucine 336–phenylalanine 356, glycine 367–leucine 387, methionine 391–asparagine 411, and isoleucine 415–isoleucine 435.

The protein belongs to the HAK/KUP transporter (TC 2.A.72) family.

The protein resides in the cell membrane. The catalysed reaction is K(+)(in) + H(+)(in) = K(+)(out) + H(+)(out). In terms of biological role, transport of potassium into the cell. Likely operates as a K(+):H(+) symporter. In Methanosarcina acetivorans (strain ATCC 35395 / DSM 2834 / JCM 12185 / C2A), this protein is Probable potassium transport system protein Kup.